A 528-amino-acid chain; its full sequence is Ulvan lyase, short isoform (528 aa).

Residues 1–29 (MKINLSMRELVSRLSTTLKTAIALSVLTA) form the signal peptide. A lipid anchor (N-palmitoyl cysteine) is attached at cysteine 30. Cysteine 30 carries S-diacylglycerol cysteine lipidation. 151–152 (SH) contributes to the substrate binding site. Catalysis depends on histidine 152, which acts as the Proton donor/acceptor. Residues aspartate 218, aspartate 228, and lysine 230 each coordinate Ca(2+). Tyrosine 309 and arginine 326 together coordinate substrate. Positions 329, 332, and 334 each coordinate Ca(2+). Histidine 390 contributes to the substrate binding site.

Belongs to the polysaccharide lyase 24 family.

Its subcellular location is the secreted. The protein resides in the cell membrane. Functionally, ulvan lyase involved in ulvan degradation. Ulvan is the main polysaccharide component of the Ulvales (green seaweed) cell wall. It is composed of disaccharide building blocks comprising 3-sulfated rhamnose (Rha3S) linked to D-glucuronic acid (GlcA), L-iduronic acid (IduA), or D-xylose (Xyl). Ulvan lyase catalyzes preferentially the endolytic cleavage of the glycosidic bond between Rha3S and the uronic acid GlcA, but not IduA, producing oligosaccharides that have unsaturated 4-deoxy-L-threo-hex-4-enopyranosiduronic acid (deltaUA) at the non-reducing end. The most abundant end products in the degradation of the ulvan polysaccharide were deltaUA-Rha3S disaccharides and deltaUA-Rha3S-IduA-Rha3S and deltaUA-Rha3S-Xyl-Rha3S tetrasaccharides. This is Ulvan lyase, short isoform from Alteromonas sp. (strain LOR).